The sequence spans 374 residues: Flagellar P-ring protein (374 aa).

The N-terminal stretch at 1–29 (MSGLGFTGVVRIAVMALLALAFLGAPAHA) is a signal peptide. Residues 296 to 311 (ESPQVSQPNPLSNGRT) are compositionally biased toward polar residues. A disordered region spans residues 296 to 316 (ESPQVSQPNPLSNGRTVMTPR).

It belongs to the FlgI family. The basal body constitutes a major portion of the flagellar organelle and consists of four rings (L,P,S, and M) mounted on a central rod.

Its subcellular location is the periplasm. It localises to the bacterial flagellum basal body. Its function is as follows. Assembles around the rod to form the L-ring and probably protects the motor/basal body from shearing forces during rotation. This Nitrobacter winogradskyi (strain ATCC 25391 / DSM 10237 / CIP 104748 / NCIMB 11846 / Nb-255) protein is Flagellar P-ring protein.